A 247-amino-acid polypeptide reads, in one-letter code: Tetraspanin-18 (247 aa).

At 1–15 (MEGDCLSCMKYLMFL) the chain is on the cytoplasmic side. The helical transmembrane segment at 16–36 (FNFFIFLGGACLLGVGIWVIV) threads the bilayer. The Extracellular portion of the chain corresponds to 37 to 49 (DPTGFREIVAANP). The helical transmembrane segment at 50-70 (LLFTGAYIMLAMGAMLFLLGF) threads the bilayer. Residues 71–82 (LGCCGAIRENKC) lie on the Cytoplasmic side of the membrane. Residues 83–103 (LLLFFFMFILLIFLAELSAAI) form a helical membrane-spanning segment. At 104–222 (LAFIFRENLT…SFETYVYLAG (119 aa)) the chain is on the extracellular side. 2 N-linked (GlcNAc...) asparagine glycosylation sites follow: Asn-111 and Asn-129. A helical transmembrane segment spans residues 223–243 (ALAIGVLAIELFAMIFAMCLF). The Cytoplasmic segment spans residues 244–247 (RGIQ).

It belongs to the tetraspanin (TM4SF) family.

It localises to the membrane. Its function is as follows. Maintains CDH6 protein and promotes CDH6-dependent adherens junctions, inhibiting neural crest migration. The sequence is that of Tetraspanin-18 from Gallus gallus (Chicken).